Consider the following 267-residue polypeptide: Ribosomal RNA small subunit methyltransferase A (267 aa).

S-adenosyl-L-methionine contacts are provided by Leu20, Gly45, Glu68, Asp91, and Asn113.

Belongs to the class I-like SAM-binding methyltransferase superfamily. rRNA adenine N(6)-methyltransferase family. RsmA subfamily.

It localises to the cytoplasm. The enzyme catalyses adenosine(1518)/adenosine(1519) in 16S rRNA + 4 S-adenosyl-L-methionine = N(6)-dimethyladenosine(1518)/N(6)-dimethyladenosine(1519) in 16S rRNA + 4 S-adenosyl-L-homocysteine + 4 H(+). In terms of biological role, specifically dimethylates two adjacent adenosines (A1518 and A1519) in the loop of a conserved hairpin near the 3'-end of 16S rRNA in the 30S particle. May play a critical role in biogenesis of 30S subunits. This is Ribosomal RNA small subunit methyltransferase A from Blochmanniella pennsylvanica (strain BPEN).